The following is a 401-amino-acid chain: 8-amino-7-oxononanoate synthase (401 aa).

R19 contacts substrate. Residue 106-107 coordinates pyridoxal 5'-phosphate; the sequence is GY. H131 is a binding site for substrate. 3 residues coordinate pyridoxal 5'-phosphate: S176, H204, and T233. K236 bears the N6-(pyridoxal phosphate)lysine mark. Residue T350 participates in substrate binding.

This sequence belongs to the class-II pyridoxal-phosphate-dependent aminotransferase family. BioF subfamily. Homodimer. It depends on pyridoxal 5'-phosphate as a cofactor.

The catalysed reaction is 6-carboxyhexanoyl-[ACP] + L-alanine + H(+) = (8S)-8-amino-7-oxononanoate + holo-[ACP] + CO2. The protein operates within cofactor biosynthesis; biotin biosynthesis. Catalyzes the decarboxylative condensation of pimeloyl-[acyl-carrier protein] and L-alanine to produce 8-amino-7-oxononanoate (AON), [acyl-carrier protein], and carbon dioxide. In Pseudomonas aeruginosa (strain ATCC 15692 / DSM 22644 / CIP 104116 / JCM 14847 / LMG 12228 / 1C / PRS 101 / PAO1), this protein is 8-amino-7-oxononanoate synthase.